The sequence spans 153 residues: MSKHSLIENLKEQIEPIAEGLDYELYHIEFVKEGKENYLRIYIDSENGVSLEGCEKVSRAVSELLDDIDPIQESYYLEVSSPGIDRVLYTDKHLEKYKGYNIVLNLYSAIDKKKKYEGELVDFNENEIDIKVEENIVTIPREKISKTTLKGEL.

The protein belongs to the RimP family.

It localises to the cytoplasm. In terms of biological role, required for maturation of 30S ribosomal subunits. In Clostridium botulinum (strain Langeland / NCTC 10281 / Type F), this protein is Ribosome maturation factor RimP.